We begin with the raw amino-acid sequence, 318 residues long: Magnetosome protein MamM (318 aa).

Positions 1–210 (MRKSGCTVCS…FMDAYRGLMD (210 aa)) are transmembrane domain (TMD). 4 consecutive transmembrane segments (helical) span residues 13 to 33 (IGWV…FVGL), 39 to 59 (AMLA…MVVI), 81 to 101 (FILS…LLVH), and 117 to 137 (LIVL…YFYS). A C-terminal domain (CTD) region spans residues 211–318 (HTAGEAVQNR…DEVMLSKVDN (108 aa)). Fe cation contacts are provided by Asp-249, His-264, His-285, and Glu-289.

The protein belongs to the cation diffusion facilitator (CDF) transporter (TC 2.A.4) family. Forms homodimers via its C-terminal domain (CTD) in the presence of metal cations. Interacts with MamB via their CTD.

It is found in the magnetosome membrane. Its subcellular location is the cell inner membrane. Probably plays a role in biomineralization. Required for stable accumulation of MamB. Probably binds and transports iron. May nucleate iron crystal formation. This chain is Magnetosome protein MamM (mamM), found in Paramagnetospirillum magneticum (strain ATCC 700264 / AMB-1) (Magnetospirillum magneticum).